We begin with the raw amino-acid sequence, 122 residues long: Acidic phospholipase A2 BpirPLA2-I (122 aa).

Disulfide bonds link Cys26-Cys115, Cys28-Cys44, Cys43-Cys95, Cys49-Cys122, Cys50-Cys88, Cys57-Cys81, and Cys75-Cys86. Residues Tyr27, Gly29, and Gly31 each coordinate Ca(2+). The active site involves His47. Residue Asp48 participates in Ca(2+) binding. The active site involves Asp89. The Antiplatelet activity signature appears at 105–117 (IKYWFYGAKNCQE).

The protein belongs to the phospholipase A2 family. Group II subfamily. D49 sub-subfamily. Ca(2+) serves as cofactor. In terms of tissue distribution, expressed by the venom gland.

The protein resides in the secreted. The enzyme catalyses a 1,2-diacyl-sn-glycero-3-phosphocholine + H2O = a 1-acyl-sn-glycero-3-phosphocholine + a fatty acid + H(+). Its activity is regulated as follows. Inhibited by EDTA and p-bromophenacyl bromide (BPB). Its function is as follows. Snake venom phospholipase A2 (PLA2) that inhibits collagen/ADP-induced platelet aggregation, and induces hypotension in rats (activity abolished in the presence of p-bromophenacyl bromide). PLA2 catalyzes the calcium-dependent hydrolysis of the 2-acyl groups in 3-sn-phosphoglycerides. In Bothrops pirajai (Piraja's lancehead), this protein is Acidic phospholipase A2 BpirPLA2-I.